A 394-amino-acid chain; its full sequence is Upstream-binding factor 1-like protein 1 (394 aa).

Residues 101 to 169 (PKRPLTAYLR…DFQKKMRQFK (69 aa)) constitute a DNA-binding region (HMG box 1). Basic residues predominate over residues 167-180 (QFKKRHPVSGHPKK). Residues 167-197 (QFKKRHPVSGHPKKSVVPQSHPTKVPTKSQG) form a disordered region. Over residues 183–197 (VPQSHPTKVPTKSQG) the composition is skewed to polar residues. Residues 225 to 291 (RKPPMNAYHK…QYRVKLDLWL (67 aa)) constitute a DNA-binding region (HMG box 2). Residues 305-394 (AKATCGKRKN…SDSSSTDEDD (90 aa)) form a disordered region.

The protein resides in the cytoplasm. The protein localises to the nucleus. In terms of biological role, essential for proliferation of the inner cell mass and trophectodermal cells in peri-implantation development. In Mus musculus (Mouse), this protein is Upstream-binding factor 1-like protein 1.